The chain runs to 92 residues: 11 kDa excretory-secretory protein (92 aa).

This is 11 kDa excretory-secretory protein from Trichostrongylus colubriformis (Black scour worm).